The primary structure comprises 472 residues: Ribosomal protein uS12 methylthiotransferase RimO (472 aa).

An MTTase N-terminal domain is found at 33–143 (NRIGFVSLGC…VLKHVHKYVP (111 aa)). [4Fe-4S] cluster-binding residues include Cys-42, Cys-78, Cys-107, Cys-175, Cys-179, and Cys-182. Positions 161–398 (LTPKHYAYLK…MEVQAEISAE (238 aa)) constitute a Radical SAM core domain. Positions 401–467 (ARFVGRTLDI…EHDLWAEVVD (67 aa)) constitute a TRAM domain.

It belongs to the methylthiotransferase family. RimO subfamily. The cofactor is [4Fe-4S] cluster.

The protein localises to the cytoplasm. It carries out the reaction L-aspartate(89)-[ribosomal protein uS12]-hydrogen + (sulfur carrier)-SH + AH2 + 2 S-adenosyl-L-methionine = 3-methylsulfanyl-L-aspartate(89)-[ribosomal protein uS12]-hydrogen + (sulfur carrier)-H + 5'-deoxyadenosine + L-methionine + A + S-adenosyl-L-homocysteine + 2 H(+). Its function is as follows. Catalyzes the methylthiolation of an aspartic acid residue of ribosomal protein uS12. The chain is Ribosomal protein uS12 methylthiotransferase RimO from Shewanella baltica (strain OS195).